Reading from the N-terminus, the 598-residue chain is Beta-hexosaminidase A (598 aa).

Residues 1-11 (MSFITSAHATA) form the signal peptide. D305 is a catalytic residue.

The protein belongs to the glycosyl hydrolase 3 family.

The enzyme catalyses Hydrolysis of terminal non-reducing N-acetyl-D-hexosamine residues in N-acetyl-beta-D-hexosaminides.. Its function is as follows. Most active towards p-nitrophenyl-N-acetyl-beta-D-glucosaminide(PNP-beta-GlcNAc) and diacetylchitobiose. The chain is Beta-hexosaminidase A (cht60) from Pseudoalteromonas piscicida.